We begin with the raw amino-acid sequence, 339 residues long: Methionine synthase (339 aa).

Residues His212, Cys214, and Cys295 each coordinate Zn(2+).

It belongs to the archaeal MetE family. Zn(2+) is required as a cofactor.

The protein operates within amino-acid biosynthesis; L-methionine biosynthesis via de novo pathway. Catalyzes the transfer of a methyl group to L-homocysteine resulting in methionine formation. The physiological methyl donor is unknown. This Sulfolobus acidocaldarius (strain ATCC 33909 / DSM 639 / JCM 8929 / NBRC 15157 / NCIMB 11770) protein is Methionine synthase.